Here is a 1096-residue protein sequence, read N- to C-terminus: Inactive phospholipase C-like protein 1 (1096 aa).

The disordered stretch occupies residues 1–101 (MAEGAASREA…KKTVSFSSMP (101 aa)). S48 carries the post-translational modification Phosphoserine. Residues 49–60 (GVALPGAAGVPA) are compositionally biased toward low complexity. Residue S78 is modified to Phosphoserine. Positions 83–222 (PSNQKCGGRK…NIWVSGLRYL (140 aa)) are interaction with PPP1C. At T94 the chain carries Phosphothreonine. A Phosphothreonine; by PKA modification is found at T94. S96 carries the phosphoserine; by PKA modification. The PH domain occupies 114 to 224 (SFMQAGCELK…WVSGLRYLVS (111 aa)). Positions 399–543 (QDMTQPLSHY…LKNMIIVKGK (145 aa)) constitute a PI-PLC X-box domain. Residues 544 to 568 (KLPSESDLLEGEVTDEDEEAEMSRR) are interaction with GABA A beta subunit. Residues 550-563 (DLLEGEVTDEDEEA) show a composition bias toward acidic residues. A disordered region spans residues 550 to 569 (DLLEGEVTDEDEEAEMSRRM). T557 is subject to Phosphothreonine. At S570 the chain carries Phosphoserine. The PI-PLC Y-box domain maps to 586–702 (LSDLVSICKS…GYVLRPSIMR (117 aa)). Positions 702-831 (RDEVSYFSAN…PGYRHVPLRS (130 aa)) constitute a C2 domain. Residues 1040–1060 (DLLKNAKNEAVENIKQIQLAC) are a coiled coil. The segment at 1067-1096 (KGPGGGSEAKGKRSLEAIEEKESSEENGKL) is disordered. The span at 1075-1096 (AKGKRSLEAIEEKESSEENGKL) shows a compositional bias: basic and acidic residues. S1080 bears the Phosphoserine mark.

Interacts with PPP2CA, Ins(1,4,5)P3, Ins(1,4,5,6)P4 GABARAP, GABA receptor beta subunits, GABA receptor gamma-2 subunits and PPP1C. May form a ternary complex with GABA receptor beta subunit and GABARAP. The formation of a ternary complex with GABA receptor beta subunit and GABARAP could be the key step for facilitating the association of GABARAP with the GABA receptor gamma-2 subunit and to allow it to be transported at the right destination. Post-translationally, phosphorylated by the catalytic subunit of PKA. Phosphorylation of Thr-94 resulted in dissociation of PPP1C from PRIP1.

The protein localises to the cytoplasm. Its function is as follows. Involved in an inositol phospholipid-based intracellular signaling cascade. Shows no PLC activity to phosphatidylinositol 4,5-bisphosphate and phosphatidylinositol. Component in the phospho-dependent endocytosis process of GABA A receptor. Acts as an inhibitor of PPP1C. Involved in the assembly and/or the trafficking of gamma-2 subunit-containing GABA A receptors. This Mus musculus (Mouse) protein is Inactive phospholipase C-like protein 1 (Plcl1).